The sequence spans 336 residues: Dihydroorotate dehydrogenase (quinone) (336 aa).

Residues 62-66 and Thr86 each bind FMN; that span reads AGLDK. Lys66 contacts substrate. Residue 111 to 115 participates in substrate binding; that stretch reads NRMGF. Residues Asn139 and Asn172 each coordinate FMN. Position 172 (Asn172) interacts with substrate. Ser175 functions as the Nucleophile in the catalytic mechanism. Substrate is bound at residue Asn177. Lys217 and Thr245 together coordinate FMN. 246–247 lines the substrate pocket; the sequence is NT. FMN contacts are provided by residues Gly268, Gly297, and 318 to 319; that span reads YS.

This sequence belongs to the dihydroorotate dehydrogenase family. Type 2 subfamily. Monomer. It depends on FMN as a cofactor.

It localises to the cell membrane. It catalyses the reaction (S)-dihydroorotate + a quinone = orotate + a quinol. It functions in the pathway pyrimidine metabolism; UMP biosynthesis via de novo pathway; orotate from (S)-dihydroorotate (quinone route): step 1/1. Functionally, catalyzes the conversion of dihydroorotate to orotate with quinone as electron acceptor. The protein is Dihydroorotate dehydrogenase (quinone) of Shigella dysenteriae serotype 1 (strain Sd197).